Here is a 239-residue protein sequence, read N- to C-terminus: 1-(5-phosphoribosyl)-5-[(5-phosphoribosylamino)methylideneamino] imidazole-4-carboxamide isomerase (239 aa).

Residue Asp8 is the Proton acceptor of the active site. Asp129 serves as the catalytic Proton donor.

It belongs to the HisA/HisF family.

The protein resides in the cytoplasm. The catalysed reaction is 1-(5-phospho-beta-D-ribosyl)-5-[(5-phospho-beta-D-ribosylamino)methylideneamino]imidazole-4-carboxamide = 5-[(5-phospho-1-deoxy-D-ribulos-1-ylimino)methylamino]-1-(5-phospho-beta-D-ribosyl)imidazole-4-carboxamide. The protein operates within amino-acid biosynthesis; L-histidine biosynthesis; L-histidine from 5-phospho-alpha-D-ribose 1-diphosphate: step 4/9. This is 1-(5-phosphoribosyl)-5-[(5-phosphoribosylamino)methylideneamino] imidazole-4-carboxamide isomerase from Bacillus cereus (strain Q1).